The sequence spans 192 residues: Tail tip assembly protein I (192 aa).

The protein belongs to the lambda-like tail tip protein I family.

The protein localises to the host cytoplasm. Plays a role in tail tip complex assembly. The tail tip complex is assembled successively with three tail tip proteins J, one tail tip protein I, one tail tip protein L and one tail tip protein K. The tail tip complex interacts with tail measure protein to initiate tail tube assembly. The formation of the tail tip complex is completed by the addition of tail tip protein M, which is followed by tail tube polymerization. May be excluded form tail tip during maturation and would be absent from virions. The protein is Tail tip assembly protein I of Escherichia phage N15 (Bacteriophage N15).